The chain runs to 466 residues: UDP-N-acetylmuramate--L-alanine ligase (466 aa).

Residue glycine 119 to threonine 125 participates in ATP binding.

The protein belongs to the MurCDEF family.

Its subcellular location is the cytoplasm. The catalysed reaction is UDP-N-acetyl-alpha-D-muramate + L-alanine + ATP = UDP-N-acetyl-alpha-D-muramoyl-L-alanine + ADP + phosphate + H(+). Its pathway is cell wall biogenesis; peptidoglycan biosynthesis. Cell wall formation. The polypeptide is UDP-N-acetylmuramate--L-alanine ligase (Cytophaga hutchinsonii (strain ATCC 33406 / DSM 1761 / CIP 103989 / NBRC 15051 / NCIMB 9469 / D465)).